The chain runs to 638 residues: 1-deoxy-D-xylulose-5-phosphate synthase (638 aa).

Thiamine diphosphate is bound by residues His-71 and 112–114 (SHA). Asp-144 lines the Mg(2+) pocket. Residues 145 to 146 (GA), Asn-173, Tyr-284, and Glu-365 contribute to the thiamine diphosphate site. Asn-173 is a binding site for Mg(2+).

Belongs to the transketolase family. DXPS subfamily. Homodimer. It depends on Mg(2+) as a cofactor. The cofactor is thiamine diphosphate.

The catalysed reaction is D-glyceraldehyde 3-phosphate + pyruvate + H(+) = 1-deoxy-D-xylulose 5-phosphate + CO2. It functions in the pathway metabolic intermediate biosynthesis; 1-deoxy-D-xylulose 5-phosphate biosynthesis; 1-deoxy-D-xylulose 5-phosphate from D-glyceraldehyde 3-phosphate and pyruvate: step 1/1. Catalyzes the acyloin condensation reaction between C atoms 2 and 3 of pyruvate and glyceraldehyde 3-phosphate to yield 1-deoxy-D-xylulose-5-phosphate (DXP). This chain is 1-deoxy-D-xylulose-5-phosphate synthase, found in Mycobacterium sp. (strain KMS).